The following is a 304-amino-acid chain: MTEQVRIEPVIDYLTGLQDRICQGIAGADGSGEFKEDSWTREEGGGGRSRVLTEGAVFEQAGINFSHVTGASLPPSATAHRPELAGRRFQATGVSLVIHPRNPYVPTSHANVRFFIAEKEGAEPIWWFGGGFDLTPYYGEDEDCVHWHRVAKAACEPFGPEVYPRYKQWCDEYFFLRHRNEPRGVGGLFFDDLNEWGFEKSFAFMRSVGDHYLDAYLPIVARRKDTPYGERERDFQLYRRGRYVEFNLVYDRGTLFGLQSGGRTESILMSLPPLVRWRYNWQPEPGTPEARLYEHFLKPREWVE.

Ser-95 is a binding site for substrate. His-99 and His-109 together coordinate a divalent metal cation. His-109 serves as the catalytic Proton donor. Residue 111–113 participates in substrate binding; the sequence is NVR. Positions 148 and 178 each coordinate a divalent metal cation. The segment at 243-278 is important for dimerization; that stretch reads YVEFNLVYDRGTLFGLQSGGRTESILMSLPPLVRWR. 261–263 lines the substrate pocket; it reads GGR.

The protein belongs to the aerobic coproporphyrinogen-III oxidase family. In terms of assembly, homodimer. A divalent metal cation serves as cofactor.

The protein resides in the cytoplasm. It catalyses the reaction coproporphyrinogen III + O2 + 2 H(+) = protoporphyrinogen IX + 2 CO2 + 2 H2O. It participates in porphyrin-containing compound metabolism; protoporphyrin-IX biosynthesis; protoporphyrinogen-IX from coproporphyrinogen-III (O2 route): step 1/1. Functionally, involved in the heme biosynthesis. Catalyzes the aerobic oxidative decarboxylation of propionate groups of rings A and B of coproporphyrinogen-III to yield the vinyl groups in protoporphyrinogen-IX. The chain is Oxygen-dependent coproporphyrinogen-III oxidase from Thioalkalivibrio sulfidiphilus (strain HL-EbGR7).